The primary structure comprises 207 residues: Pyridoxine/pyridoxamine 5'-phosphate oxidase (207 aa).

Residues 53–58, 68–69, Lys75, and Gln97 each bind FMN; these read RMVLLK and YT. Lys58 provides a ligand contact to substrate. Residues Tyr115, Arg119, and Ser123 each contribute to the substrate site. FMN is bound by residues 132 to 133 and Trp177; that span reads QS. A substrate-binding site is contributed by 183-185; sequence RLH. Position 187 (Arg187) interacts with FMN.

This sequence belongs to the pyridoxamine 5'-phosphate oxidase family. As to quaternary structure, homodimer. It depends on FMN as a cofactor.

It catalyses the reaction pyridoxamine 5'-phosphate + O2 + H2O = pyridoxal 5'-phosphate + H2O2 + NH4(+). The enzyme catalyses pyridoxine 5'-phosphate + O2 = pyridoxal 5'-phosphate + H2O2. The protein operates within cofactor metabolism; pyridoxal 5'-phosphate salvage; pyridoxal 5'-phosphate from pyridoxamine 5'-phosphate: step 1/1. Its pathway is cofactor metabolism; pyridoxal 5'-phosphate salvage; pyridoxal 5'-phosphate from pyridoxine 5'-phosphate: step 1/1. In terms of biological role, catalyzes the oxidation of either pyridoxine 5'-phosphate (PNP) or pyridoxamine 5'-phosphate (PMP) into pyridoxal 5'-phosphate (PLP). The protein is Pyridoxine/pyridoxamine 5'-phosphate oxidase of Bartonella henselae (strain ATCC 49882 / DSM 28221 / CCUG 30454 / Houston 1) (Rochalimaea henselae).